The chain runs to 867 residues: Bifunctional diterpene synthase, chloroplastic (867 aa).

A chloroplast-targeting transit peptide spans Met-1–Cys-55. Lys-255 serves as a coordination point for substrate. Residues Asp-389 and Asp-391 each coordinate Mg(2+). A DXDD motif motif is present at residues Asp-389 to Asp-392. Residue Lys-474 participates in substrate binding. The Mg(2+) site is built by Asp-611, Asp-615, Asn-758, Thr-762, and Glu-766. The DDXXD motif motif lies at Asp-611–Asp-615.

Belongs to the terpene synthase family. The cofactor is Mg(2+).

The protein resides in the plastid. The protein localises to the chloroplast. It catalyses the reaction (+)-copalyl diphosphate = miltiradiene + diphosphate. The catalysed reaction is (2E,6E,10E)-geranylgeranyl diphosphate = (+)-copalyl diphosphate. It participates in secondary metabolite biosynthesis; terpenoid biosynthesis. Its function is as follows. Bifunctional diterpene cyclase that catalyzes the successive two-step type-B (protonation-initiated cyclization) and type-A (ionization-initiated cyclization) reactions of geranylgeranyl diphosphate (GGDP) producing successively (+)-copalyl diphosphate and miltiradiene. This is Bifunctional diterpene synthase, chloroplastic (MDS) from Selaginella moellendorffii (Spikemoss).